A 110-amino-acid chain; its full sequence is Insulin-1 (110 aa).

An N-terminal signal peptide occupies residues 1–24; that stretch reads MALWMRFLPLLALLVLWEPKPAQA. 3 disulfide bridges follow: Cys31–Cys96, Cys43–Cys109, and Cys95–Cys100. The propeptide at 57-87 is c peptide; that stretch reads EVEDPQVPQLELGGGPEAGDLQTLALEVARQ.

Belongs to the insulin family. In terms of assembly, heterodimer of a B chain and an A chain linked by two disulfide bonds.

The protein localises to the secreted. Its function is as follows. Insulin decreases blood glucose concentration. It increases cell permeability to monosaccharides, amino acids and fatty acids. It accelerates glycolysis, the pentose phosphate cycle, and glycogen synthesis in liver. This Rattus norvegicus (Rat) protein is Insulin-1 (Ins1).